A 744-amino-acid chain; its full sequence is Phosphoribosylformylglycinamidine synthase subunit PurL (744 aa).

H45 is a catalytic residue. 2 residues coordinate ATP: Y48 and K87. Residue E89 coordinates Mg(2+). Residues 90 to 93 and R112 contribute to the substrate site; that span reads SHNH. H91 acts as the Proton acceptor in catalysis. D113 contacts Mg(2+). Residue Q236 participates in substrate binding. D264 contacts Mg(2+). Substrate is bound at residue 308–310; sequence ESQ. N492 and G529 together coordinate ATP. Position 530 (N530) interacts with Mg(2+). Residue S532 participates in substrate binding.

Belongs to the FGAMS family. Monomer. Part of the FGAM synthase complex composed of 1 PurL, 1 PurQ and 2 PurS subunits.

It is found in the cytoplasm. It carries out the reaction N(2)-formyl-N(1)-(5-phospho-beta-D-ribosyl)glycinamide + L-glutamine + ATP + H2O = 2-formamido-N(1)-(5-O-phospho-beta-D-ribosyl)acetamidine + L-glutamate + ADP + phosphate + H(+). It functions in the pathway purine metabolism; IMP biosynthesis via de novo pathway; 5-amino-1-(5-phospho-D-ribosyl)imidazole from N(2)-formyl-N(1)-(5-phospho-D-ribosyl)glycinamide: step 1/2. Part of the phosphoribosylformylglycinamidine synthase complex involved in the purines biosynthetic pathway. Catalyzes the ATP-dependent conversion of formylglycinamide ribonucleotide (FGAR) and glutamine to yield formylglycinamidine ribonucleotide (FGAM) and glutamate. The FGAM synthase complex is composed of three subunits. PurQ produces an ammonia molecule by converting glutamine to glutamate. PurL transfers the ammonia molecule to FGAR to form FGAM in an ATP-dependent manner. PurS interacts with PurQ and PurL and is thought to assist in the transfer of the ammonia molecule from PurQ to PurL. This Erythrobacter litoralis (strain HTCC2594) protein is Phosphoribosylformylglycinamidine synthase subunit PurL.